The sequence spans 740 residues: Phosphoribosylformylglycinamidine synthase subunit PurL (740 aa).

His-49 is a catalytic residue. ATP is bound by residues Tyr-52 and Lys-91. Glu-93 lines the Mg(2+) pocket. Residues Ser-94–His-97 and Arg-116 each bind substrate. The active-site Proton acceptor is His-95. Asp-117 lines the Mg(2+) pocket. Residue Gln-245 coordinates substrate. Residue Asp-273 participates in Mg(2+) binding. Glu-317–Gln-319 contacts substrate. Asp-501 and Gly-538 together coordinate ATP. Asn-539 serves as a coordination point for Mg(2+). Ser-541 is a substrate binding site.

Belongs to the FGAMS family. In terms of assembly, monomer. Part of the FGAM synthase complex composed of 1 PurL, 1 PurQ and 2 PurS subunits.

The protein resides in the cytoplasm. It carries out the reaction N(2)-formyl-N(1)-(5-phospho-beta-D-ribosyl)glycinamide + L-glutamine + ATP + H2O = 2-formamido-N(1)-(5-O-phospho-beta-D-ribosyl)acetamidine + L-glutamate + ADP + phosphate + H(+). It participates in purine metabolism; IMP biosynthesis via de novo pathway; 5-amino-1-(5-phospho-D-ribosyl)imidazole from N(2)-formyl-N(1)-(5-phospho-D-ribosyl)glycinamide: step 1/2. Part of the phosphoribosylformylglycinamidine synthase complex involved in the purines biosynthetic pathway. Catalyzes the ATP-dependent conversion of formylglycinamide ribonucleotide (FGAR) and glutamine to yield formylglycinamidine ribonucleotide (FGAM) and glutamate. The FGAM synthase complex is composed of three subunits. PurQ produces an ammonia molecule by converting glutamine to glutamate. PurL transfers the ammonia molecule to FGAR to form FGAM in an ATP-dependent manner. PurS interacts with PurQ and PurL and is thought to assist in the transfer of the ammonia molecule from PurQ to PurL. This Sulfurovum sp. (strain NBC37-1) protein is Phosphoribosylformylglycinamidine synthase subunit PurL.